Consider the following 128-residue polypeptide: Large ribosomal subunit protein bL12 (128 aa).

It belongs to the bacterial ribosomal protein bL12 family. As to quaternary structure, homodimer. Part of the ribosomal stalk of the 50S ribosomal subunit. Forms a multimeric L10(L12)X complex, where L10 forms an elongated spine to which 2 to 4 L12 dimers bind in a sequential fashion. Binds GTP-bound translation factors.

Functionally, forms part of the ribosomal stalk which helps the ribosome interact with GTP-bound translation factors. Is thus essential for accurate translation. This is Large ribosomal subunit protein bL12 from Corynebacterium kroppenstedtii (strain DSM 44385 / JCM 11950 / CIP 105744 / CCUG 35717).